The primary structure comprises 300 residues: tRNA dimethylallyltransferase (300 aa).

Residue 11–18 coordinates ATP; it reads GPTAVGKS. 13–18 provides a ligand contact to substrate; it reads TAVGKS. The segment at 35-38 is interaction with substrate tRNA; that stretch reads DSVQ.

This sequence belongs to the IPP transferase family. As to quaternary structure, monomer. Mg(2+) serves as cofactor.

The enzyme catalyses adenosine(37) in tRNA + dimethylallyl diphosphate = N(6)-dimethylallyladenosine(37) in tRNA + diphosphate. Its function is as follows. Catalyzes the transfer of a dimethylallyl group onto the adenine at position 37 in tRNAs that read codons beginning with uridine, leading to the formation of N6-(dimethylallyl)adenosine (i(6)A). The protein is tRNA dimethylallyltransferase of Borrelia hermsii (strain HS1 / DAH).